We begin with the raw amino-acid sequence, 152 residues long: Small ribosomal subunit protein uS15 (152 aa).

A compositionally biased stretch (basic residues) spans 1 to 11 (MAKMHTKRKGK). The disordered stretch occupies residues 1–24 (MAKMHTKRKGKSSSTRPNRTEPPE).

It belongs to the universal ribosomal protein uS15 family. In terms of assembly, part of the 30S ribosomal subunit.

The sequence is that of Small ribosomal subunit protein uS15 from Methanosarcina mazei (strain ATCC BAA-159 / DSM 3647 / Goe1 / Go1 / JCM 11833 / OCM 88) (Methanosarcina frisia).